Consider the following 900-residue polypeptide: DNA mismatch repair protein MutS (900 aa).

An ATP-binding site is contributed by 637 to 644 (GPNMAGKS).

This sequence belongs to the DNA mismatch repair MutS family.

Functionally, this protein is involved in the repair of mismatches in DNA. It is possible that it carries out the mismatch recognition step. This protein has a weak ATPase activity. In Methanosarcina acetivorans (strain ATCC 35395 / DSM 2834 / JCM 12185 / C2A), this protein is DNA mismatch repair protein MutS.